A 336-amino-acid chain; its full sequence is CMP-sialic acid transporter (336 aa).

The Cytoplasmic portion of the chain corresponds to 1-9 (MAPARENVS). The helical transmembrane segment at 10 to 30 (LFFKLYCLTVMTLVAAAYTVA) threads the bilayer. Topologically, residues 31-45 (LRYTRTTAEELYFST) are lumenal. A helical transmembrane segment spans residues 46–64 (TAVCITEVIKLLISVGLLA). K55 contacts CMP-N-acetyl-beta-neuraminate. Over 65–87 (KETGSLGRFKASLSENVLGSPKE) the chain is Cytoplasmic. Residues 88-108 (LAKLSVPSLVYAVQNNMAFLA) form a helical membrane-spanning segment. Residue 101–102 (QN) participates in CMP-N-acetyl-beta-neuraminate binding. Over 109–114 (LSNLDA) the chain is Lumenal. Residues 115 to 135 (AVYQVTYQLKIPCTALCTVLM) traverse the membrane as a helical segment. 117-124 (YQVTYQLK) provides a ligand contact to CMP-N-acetyl-beta-neuraminate. Residues 136 to 141 (LNRTLS) lie on the Cytoplasmic side of the membrane. The chain crosses the membrane as a helical span at residues 142–160 (KLQWISVFMLCGGVTLVQW). The Lumenal segment spans residues 161–175 (KPAQATKVVVAQNPL). The chain crosses the membrane as a helical span at residues 176-196 (LGFGAIAIAVLCSGFAGVYFE). Position 188 (S188) interacts with CMP-N-acetyl-beta-neuraminate. The Cytoplasmic portion of the chain corresponds to 197-209 (KVLKSSDTSLWVR). 210–214 (NIQMY) is a CMP-N-acetyl-beta-neuraminate binding site. Residues 210-228 (NIQMYLSGIVVTLAGTYLS) traverse the membrane as a helical segment. Residues 229–243 (DGAEIQEKGFFYGYT) lie on the Lumenal side of the membrane. Residues 244-262 (YYVWFVIFLASVGGLYTSV) traverse the membrane as a helical segment. Over 263-269 (VVKYTDN) the chain is Cytoplasmic. Residues 270-288 (IMKGFSAAAAIVLSTIASV) form a helical membrane-spanning segment. Residue K272 participates in CMP-N-acetyl-beta-neuraminate binding. At 289 to 296 (LLFGLQIT) the chain is on the lumenal side. The helical transmembrane segment at 297-315 (LSFALGALLVCVSIYLYGL) threads the bilayer. Residues 316–336 (PRQDTTSIQQEATSKERIIGV) are Cytoplasmic-facing. The tract at residues 316-336 (PRQDTTSIQQEATSKERIIGV) is disordered.

This sequence belongs to the nucleotide-sugar transporter family. SLC35A subfamily. In terms of assembly, monomer. As to expression, ubiquitous. Found in all the tissues examined including skeletal muscle, brain, heart, liver, kidney and spleen.

It localises to the golgi apparatus membrane. It catalyses the reaction CMP-N-acetyl-beta-neuraminate(in) + CMP(out) = CMP-N-acetyl-beta-neuraminate(out) + CMP(in). The catalysed reaction is CMP-N-acetyl-beta-neuraminate(in) + AMP(out) = CMP-N-acetyl-beta-neuraminate(out) + AMP(in). It carries out the reaction CDP-L-ribitol(in) + CDP(out) = CDP-L-ribitol(out) + CDP(in). The enzyme catalyses UMP(out) + CMP-N-acetyl-beta-neuraminate(in) = UMP(in) + CMP-N-acetyl-beta-neuraminate(out). Functionally, transports CMP-sialic acid from the cytosol into the Golgi apparatus, functioning as an antiporter that exchanges CMP-sialic acid for CMP. Binds both CMP-sialic acid and free CMP, but has higher affinity for free CMP. Also able to exchange CMP-sialic acid for AMP and UMP. Also mediates the transport of CDP-ribitol. The chain is CMP-sialic acid transporter from Mus musculus (Mouse).